The sequence spans 361 residues: DNA replication and repair protein RecF (361 aa).

Residue 30–37 participates in ATP binding; the sequence is GPNGSGKT.

The protein belongs to the RecF family.

It localises to the cytoplasm. Its function is as follows. The RecF protein is involved in DNA metabolism; it is required for DNA replication and normal SOS inducibility. RecF binds preferentially to single-stranded, linear DNA. It also seems to bind ATP. The polypeptide is DNA replication and repair protein RecF (Erwinia tasmaniensis (strain DSM 17950 / CFBP 7177 / CIP 109463 / NCPPB 4357 / Et1/99)).